Here is a 246-residue protein sequence, read N- to C-terminus: Ribonuclease 3 (246 aa).

An RNase III domain is found at 10-135 (LENFLTLNNI…FVAAIYLDLG (126 aa)). Mg(2+) is bound at residue Glu-50. Asp-54 is an active-site residue. Asp-121 and Glu-124 together coordinate Mg(2+). Glu-124 is a catalytic residue. Residues 161–230 (DPKSSFQEYI…ATRALETLKA (70 aa)) enclose the DRBM domain.

The protein belongs to the ribonuclease III family. As to quaternary structure, homodimer. It depends on Mg(2+) as a cofactor.

It is found in the cytoplasm. The enzyme catalyses Endonucleolytic cleavage to 5'-phosphomonoester.. Functionally, digests double-stranded RNA. Involved in the processing of primary rRNA transcript to yield the immediate precursors to the large and small rRNAs (23S and 16S). Processes some mRNAs, and tRNAs when they are encoded in the rRNA operon. Processes pre-crRNA and tracrRNA of type II CRISPR loci if present in the organism. This is Ribonuclease 3 from Mycoplasma mobile (strain ATCC 43663 / 163K / NCTC 11711) (Mesomycoplasma mobile).